The chain runs to 464 residues: 3-isopropylmalate dehydratase large subunit (464 aa).

[4Fe-4S] cluster-binding residues include Cys-337, Cys-397, and Cys-400.

The protein belongs to the aconitase/IPM isomerase family. LeuC type 1 subfamily. In terms of assembly, heterodimer of LeuC and LeuD. [4Fe-4S] cluster is required as a cofactor.

The enzyme catalyses (2R,3S)-3-isopropylmalate = (2S)-2-isopropylmalate. It functions in the pathway amino-acid biosynthesis; L-leucine biosynthesis; L-leucine from 3-methyl-2-oxobutanoate: step 2/4. Catalyzes the isomerization between 2-isopropylmalate and 3-isopropylmalate, via the formation of 2-isopropylmaleate. The polypeptide is 3-isopropylmalate dehydratase large subunit (Bacillus cereus (strain ATCC 10987 / NRS 248)).